Reading from the N-terminus, the 130-residue chain is Protein NrdI (130 aa).

This sequence belongs to the NrdI family.

Probably involved in ribonucleotide reductase function. This Staphylococcus carnosus (strain TM300) protein is Protein NrdI.